A 275-amino-acid polypeptide reads, in one-letter code: Ribosomal protein L11 methyltransferase (275 aa).

S-adenosyl-L-methionine is bound by residues threonine 130, glycine 151, aspartate 172, and asparagine 213.

The protein belongs to the methyltransferase superfamily. PrmA family.

The protein localises to the cytoplasm. It catalyses the reaction L-lysyl-[protein] + 3 S-adenosyl-L-methionine = N(6),N(6),N(6)-trimethyl-L-lysyl-[protein] + 3 S-adenosyl-L-homocysteine + 3 H(+). Methylates ribosomal protein L11. In Wolinella succinogenes (strain ATCC 29543 / DSM 1740 / CCUG 13145 / JCM 31913 / LMG 7466 / NCTC 11488 / FDC 602W) (Vibrio succinogenes), this protein is Ribosomal protein L11 methyltransferase.